Reading from the N-terminus, the 192-residue chain is MKNKVVVVTGVPGVGGTTVTQKAMDILSEEGLTYKMVNFGSAMFDVANEEGIASDRDQMRKLDPETQKRIQKMAGRKIAEMAKESPVAVDTHSTVKTPKGYLPGLPAWVLTELNPDIVIVVETDGDEILMRRLSDESRKRDLETTASIEEHQFMNRAAAMSYGVLTGATVKIVKNKNGLVDNAVEELISVLR.

10–18 (GVPGVGGTT) lines the ATP pocket.

Belongs to the archaeal adenylate kinase family. In terms of assembly, monomer.

It localises to the cytoplasm. It catalyses the reaction AMP + ATP = 2 ADP. This is Adenylate kinase from Methanococcus maripaludis (strain C5 / ATCC BAA-1333).